The chain runs to 76 residues: Conotoxin Gla(1)-TxVI (76 aa).

The signal sequence occupies residues Met1 to Ala19. A propeptide spanning residues Leu20–Arg45 is cleaved from the precursor. Position 48 is a 6'-bromotryptophan (Trp48). Glu50 is modified (4-carboxyglutamate). Cystine bridges form between Cys51–Cys65, Cys58–Cys69, and Cys64–Cys73. Position 61 is a 4-hydroxyproline (Pro61). 3 positions are modified to 4-carboxyglutamate: Glu63, Glu67, and Glu70. At Trp76 the chain carries 6'-bromotryptophan.

As to expression, expressed by the venom duct.

It is found in the secreted. This Conus textile (Cloth-of-gold cone) protein is Conotoxin Gla(1)-TxVI.